Reading from the N-terminus, the 337-residue chain is Anthranilate phosphoribosyltransferase (337 aa).

Residues Gly-81, Gly-84 to Asp-85, Thr-89, Asn-91 to Thr-94, Lys-109 to Ser-117, and Thr-121 contribute to the 5-phospho-alpha-D-ribose 1-diphosphate site. An anthranilate-binding site is contributed by Gly-81. Ser-93 is a Mg(2+) binding site. Residue Asn-112 participates in anthranilate binding. Arg-167 serves as a coordination point for anthranilate. The Mg(2+) site is built by Asp-225 and Glu-226.

The protein belongs to the anthranilate phosphoribosyltransferase family. As to quaternary structure, homodimer. Mg(2+) is required as a cofactor.

The catalysed reaction is N-(5-phospho-beta-D-ribosyl)anthranilate + diphosphate = 5-phospho-alpha-D-ribose 1-diphosphate + anthranilate. It functions in the pathway amino-acid biosynthesis; L-tryptophan biosynthesis; L-tryptophan from chorismate: step 2/5. In terms of biological role, catalyzes the transfer of the phosphoribosyl group of 5-phosphorylribose-1-pyrophosphate (PRPP) to anthranilate to yield N-(5'-phosphoribosyl)-anthranilate (PRA). This is Anthranilate phosphoribosyltransferase from Rhizobium meliloti (strain 1021) (Ensifer meliloti).